The primary structure comprises 431 residues: Gamma-glutamyl phosphate reductase (431 aa).

This sequence belongs to the gamma-glutamyl phosphate reductase family.

The protein localises to the cytoplasm. The enzyme catalyses L-glutamate 5-semialdehyde + phosphate + NADP(+) = L-glutamyl 5-phosphate + NADPH + H(+). Its pathway is amino-acid biosynthesis; L-proline biosynthesis; L-glutamate 5-semialdehyde from L-glutamate: step 2/2. In terms of biological role, catalyzes the NADPH-dependent reduction of L-glutamate 5-phosphate into L-glutamate 5-semialdehyde and phosphate. The product spontaneously undergoes cyclization to form 1-pyrroline-5-carboxylate. The polypeptide is Gamma-glutamyl phosphate reductase (Trichodesmium erythraeum (strain IMS101)).